The primary structure comprises 313 residues: MTDIMTDTQKDTAAGAVPTRSGFVALIGATNAGKSTLVNRLVGAKVSIVSHKVQTTRAIIRGIAIHGSAQIVFMDTPGIFKPRRRLDRAMVTTAWGGAKDADLIMLLIDSERGIKGDAEAILEGLKEVHQPKVLVLNKVDQVRREDLLKLAAAANDVVAFERTFMISALTGSGCEDVMDYLAETLPEGPWYYPEDQISDLPMRQLAAEITREKLFLRLHQELPYASHVETEKWEERKDGSVRIEQVIYVERDSQKKIALGKGGEAIKAISTAARKEISEILEQPVHLFLFVKVRENWGDDPERFREMGLDFPK.

Residues 20–187 enclose the Era-type G domain; the sequence is RSGFVALIGA…MDYLAETLPE (168 aa). Residues 28–35 are G1; it reads GATNAGKS. 28–35 contacts GTP; the sequence is GATNAGKS. A G2 region spans residues 54 to 58; sequence QTTRA. Residues 75–78 are G3; sequence DTPG. GTP is bound by residues 75–79 and 137–140; these read DTPGI and NKVD. The segment at 137 to 140 is G4; the sequence is NKVD. The tract at residues 166-168 is G5; it reads ISA. Positions 218–295 constitute a KH type-2 domain; that stretch reads LHQELPYASH…HLFLFVKVRE (78 aa).

Belongs to the TRAFAC class TrmE-Era-EngA-EngB-Septin-like GTPase superfamily. Era GTPase family. In terms of assembly, monomer.

It localises to the cytoplasm. It is found in the cell inner membrane. Functionally, an essential GTPase that binds both GDP and GTP, with rapid nucleotide exchange. Plays a role in 16S rRNA processing and 30S ribosomal subunit biogenesis and possibly also in cell cycle regulation and energy metabolism. This is GTPase Era from Rhizobium meliloti (strain 1021) (Ensifer meliloti).